We begin with the raw amino-acid sequence, 563 residues long: Serine carboxypeptidase S10 family member 2 (563 aa).

The first 23 residues, 1-23 (MNIKIILLSIILIIQLLLLNNNG), serve as a signal peptide directing secretion. Over 24–529 (GIVESKINFS…VPLTLGAWIG (506 aa)) the chain is Extracellular. N-linked (GlcNAc...) asparagine glycosylation is found at Asn-31, Asn-95, Asn-110, and Asn-213. The active site involves Ser-225. N-linked (GlcNAc...) asparagine glycans are attached at residues Asn-244, Asn-328, and Asn-382. Asp-417 is an active-site residue. The N-linked (GlcNAc...) asparagine glycan is linked to Asn-468. His-479 is an active-site residue. An N-linked (GlcNAc...) asparagine glycan is attached at Asn-499. The chain crosses the membrane as a helical span at residues 530 to 550 (ITVGGCAFGFLVGGLIIYIIM). Topologically, residues 551 to 563 (KKSSKNGYYKVIQ) are cytoplasmic.

This sequence belongs to the peptidase S10 family.

It is found in the membrane. Probable carboxypeptidase. This is Serine carboxypeptidase S10 family member 2 from Dictyostelium discoideum (Social amoeba).